Here is a 404-residue protein sequence, read N- to C-terminus: Acetylornithine/succinyldiaminopimelate aminotransferase (404 aa).

Residues 108–109 (GA) and F141 each bind pyridoxal 5'-phosphate. Residue R144 participates in N(2)-acetyl-L-ornithine binding. Position 226–229 (226–229 (DEIQ)) interacts with pyridoxal 5'-phosphate. K255 bears the N6-(pyridoxal phosphate)lysine mark. T283 provides a ligand contact to N(2)-acetyl-L-ornithine. T284 is a binding site for pyridoxal 5'-phosphate.

Belongs to the class-III pyridoxal-phosphate-dependent aminotransferase family. ArgD subfamily. As to quaternary structure, homodimer. The cofactor is pyridoxal 5'-phosphate.

It is found in the cytoplasm. It catalyses the reaction N(2)-acetyl-L-ornithine + 2-oxoglutarate = N-acetyl-L-glutamate 5-semialdehyde + L-glutamate. It carries out the reaction N-succinyl-(2S,6S)-2,6-diaminopimelate + 2-oxoglutarate = (S)-2-succinylamino-6-oxoheptanedioate + L-glutamate. The protein operates within amino-acid biosynthesis; L-arginine biosynthesis; N(2)-acetyl-L-ornithine from L-glutamate: step 4/4. It participates in amino-acid biosynthesis; L-lysine biosynthesis via DAP pathway; LL-2,6-diaminopimelate from (S)-tetrahydrodipicolinate (succinylase route): step 2/3. Its function is as follows. Involved in both the arginine and lysine biosynthetic pathways. The polypeptide is Acetylornithine/succinyldiaminopimelate aminotransferase (Buchnera aphidicola subsp. Schizaphis graminum (strain Sg)).